Here is a 726-residue protein sequence, read N- to C-terminus: MTTEAKCPFLHPAGAGRALQEWWPERLNLHILRQNAPLSDPMGEAFDYAKAFNSLDLAAVKKDLEALMTDSQSWWPADFGHYGPLFVRMAWHAAGTYRIGDGRGGAGAGQQRFAPTNSWPDNVSLDKARRLIWPIKQKYGRKISWADLIVLTGNVALESMGFKTFGFGGGREDVYEPDESVYWGNEAEWLADKRYSGNRNLENPLAAVQMGLIYVNPEGPNGNPDPVAAAIDIRETFRRMAMNDEETVALIAGGHAFGKTHGAGPASHVGPEPEAAGLEEQGLGWRSSFGTGKGGDAIGSGLEVIWTTTPTKWSNDFFKHLFEYEWELTKSPAGAHQWKPKGNAGAGTVPDPADPSKRRSPSMLTTDLSLRFDSIYGKISRRYYDHPDELADAFARAWFKLTHRDMGPRARYLGPEVPKEELLWQDPIPPVDHPLIDAKDVAALKAKVQASGLTVPQLVSTAWASASTFRGSDKRGGANGARIRLAPQKDWDVNQPAELAKVLVKLESIQSEFNKAQSGGKKVSMADLIVLAGCAGVEQAAKSAGQDVTVPFSPGRMDTTQEKTDLDAMVVLEPIADGFRNYLQGKFSVRAEALLVDKAQLLKLTVPEMTALVGGLRVLGANFGNSQHGVFTKRPGTLTNDFFVNLLDMGTEWKPVSEEREVFEGSDRATGTPRWTGTRVDLVFGSNSELRAVAEVYGAADAQEKFVQDFVAAWSKVMNLDRFDLK.

The tryptophyl-tyrosyl-methioninium (Trp-Tyr) (with M-240) cross-link spans 91–214 (WHAAGTYRIG…LAAVQMGLIY (124 aa)). H92 serves as the catalytic Proton acceptor. A cross-link (tryptophyl-tyrosyl-methioninium (Tyr-Met) (with W-91)) is located at residues 214 to 240 (YVNPEGPNGNPDPVAAAIDIRETFRRM). H255 serves as a coordination point for heme b. A disordered region spans residues 335–362 (AHQWKPKGNAGAGTVPDPADPSKRRSPS).

It belongs to the peroxidase family. Peroxidase/catalase subfamily. In terms of assembly, homodimer or homotetramer. Heme b is required as a cofactor. Post-translationally, formation of the three residue Trp-Tyr-Met cross-link is important for the catalase, but not the peroxidase activity of the enzyme.

The catalysed reaction is H2O2 + AH2 = A + 2 H2O. It carries out the reaction 2 H2O2 = O2 + 2 H2O. In terms of biological role, bifunctional enzyme with both catalase and broad-spectrum peroxidase activity. The polypeptide is Catalase-peroxidase (Cupriavidus metallidurans (strain ATCC 43123 / DSM 2839 / NBRC 102507 / CH34) (Ralstonia metallidurans)).